The following is a 156-amino-acid chain: Regulatory protein RecX (156 aa).

The protein belongs to the RecX family.

The protein localises to the cytoplasm. Modulates RecA activity. The polypeptide is Regulatory protein RecX (Pseudomonas putida (strain W619)).